The primary structure comprises 244 residues: 3-oxoacyl-[acyl-carrier-protein] reductase FabG (244 aa).

Residues Gly-12 to Arg-15 and Thr-37 each bind NADP(+). Residues Gly-50 and Gly-53 each contribute to the Ca(2+) site. Residues Asn-59–Val-60 and Asn-86 each bind NADP(+). Ser-138 is a substrate binding site. Asn-145 lines the Ca(2+) pocket. The active-site Proton acceptor is the Tyr-151. Residues Tyr-151–Lys-155 and Ile-184 contribute to the NADP(+) site. Ca(2+) is bound by residues Glu-233 and Thr-234.

The protein belongs to the short-chain dehydrogenases/reductases (SDR) family. In terms of assembly, homotetramer.

The enzyme catalyses a (3R)-hydroxyacyl-[ACP] + NADP(+) = a 3-oxoacyl-[ACP] + NADPH + H(+). It carries out the reaction 3-oxobutanoyl-[ACP] + NADPH + H(+) = (3R)-hydroxybutanoyl-[ACP] + NADP(+). The catalysed reaction is 3-oxopentanoyl-[ACP] + NADPH + H(+) = (3R)-hydroxypentanoyl-[ACP] + NADP(+). It catalyses the reaction 3-oxohexanoyl-[ACP] + NADPH + H(+) = (3R)-hydroxyhexanoyl-[ACP] + NADP(+). The enzyme catalyses 3-oxoheptanoyl-[ACP] + NADPH + H(+) = (3R)-hydroxyheptanoyl-[ACP] + NADP(+). It carries out the reaction 3-oxooctanoyl-[ACP] + NADPH + H(+) = (3R)-hydroxyoctanoyl-[ACP] + NADP(+). The catalysed reaction is 3-oxononanoyl-[ACP] + NADPH + H(+) = (3R)-hydroxynonanoyl-[ACP] + NADP(+). It catalyses the reaction 3-oxodecanoyl-[ACP] + NADPH + H(+) = (3R)-hydroxydecanoyl-[ACP] + NADP(+). The enzyme catalyses 3-oxohexadecanoyl-[ACP] + NADPH + H(+) = (3R)-hydroxyhexadecanoyl-[ACP] + NADP(+). It carries out the reaction 3-oxo-(9Z)-hexadecenoyl-[ACP] + NADPH + H(+) = (3R)-hydroxy-(9Z)-hexadecenoyl-[ACP] + NADP(+). The catalysed reaction is 4-methyl-3-oxopentanoyl-[ACP] + NADPH + H(+) = (3R)-hydroxy-4-methylpentanoyl-[ACP] + NADP(+). It catalyses the reaction 5-methyl-3-oxohexanoyl-[ACP] + NADPH + H(+) = (3R)-hydroxy-5-methylhexanoyl-[ACP] + NADP(+). The enzyme catalyses 4-methyl-3-oxohexanoyl-[ACP] + NADPH + H(+) = (3R)-hydroxy-4-methylhexanoyl-[ACP] + NADP(+). It functions in the pathway lipid metabolism; fatty acid biosynthesis. Inhibited by cinnamic acid derivatives. Catalyzes the NADPH-dependent reduction of beta-ketoacyl-ACP substrates to beta-hydroxyacyl-ACP products, the first reductive step in the elongation cycle of fatty acid biosynthesis. The protein is 3-oxoacyl-[acyl-carrier-protein] reductase FabG (fabG) of Escherichia coli (strain K12).